Consider the following 177-residue polypeptide: Chorismate pyruvate-lyase (177 aa).

4 residues coordinate substrate: Met37, Arg79, Leu117, and Glu159.

This sequence belongs to the UbiC family. In terms of assembly, monomer.

The protein resides in the cytoplasm. It carries out the reaction chorismate = 4-hydroxybenzoate + pyruvate. It participates in cofactor biosynthesis; ubiquinone biosynthesis. Functionally, removes the pyruvyl group from chorismate, with concomitant aromatization of the ring, to provide 4-hydroxybenzoate (4HB) for the ubiquinone pathway. This Sodalis glossinidius (strain morsitans) protein is Chorismate pyruvate-lyase.